Reading from the N-terminus, the 349-residue chain is Ion-translocating oxidoreductase complex subunit D (349 aa).

3 consecutive transmembrane segments (helical) span residues 36–56 (CAFF…VALS), 77–99 (SAML…WMIV), and 124–144 (AMAA…SWIA). T185 carries the FMN phosphoryl threonine modification. Transmembrane regions (helical) follow at residues 212–232 (GTGV…LVLL), 239–259 (WHIS…GFLL), 265–285 (ASPL…FIAT), 291–311 (ATSP…VYVI), and 315–335 (GGYP…APFI).

The protein belongs to the NqrB/RnfD family. In terms of assembly, the complex is composed of six subunits: RnfA, RnfB, RnfC, RnfD, RnfE and RnfG. Requires FMN as cofactor.

The protein resides in the cell inner membrane. Functionally, part of a membrane-bound complex that couples electron transfer with translocation of ions across the membrane. This Shewanella sp. (strain MR-4) protein is Ion-translocating oxidoreductase complex subunit D.